The following is a 241-amino-acid chain: ATP synthase subunit a (241 aa).

The next 5 helical transmembrane spans lie at 30-50 (GQIFLSSWILIGALLAFVLVG), 89-109 (LPFIGTLFLFIFVSNWGGALI), 128-148 (INTTVAMALLVTLAYFYAGLS), 193-213 (LAVGVLVYLVPLIVPLPVMLL), and 214-234 (GLFTSAIQALIFATLAAFYIG).

Belongs to the ATPase A chain family. In terms of assembly, F-type ATPases have 2 components, CF(1) - the catalytic core - and CF(0) - the membrane proton channel. CF(1) has five subunits: alpha(3), beta(3), gamma(1), delta(1), epsilon(1). CF(0) has four main subunits: a, b, b' and c.

The protein resides in the cellular thylakoid membrane. Functionally, key component of the proton channel; it plays a direct role in the translocation of protons across the membrane. This Synechococcus sp. (strain CC9311) protein is ATP synthase subunit a.